Reading from the N-terminus, the 131-residue chain is Small ribosomal subunit protein uS11 (131 aa).

It belongs to the universal ribosomal protein uS11 family. As to quaternary structure, part of the 30S ribosomal subunit. Interacts with proteins S7 and S18. Binds to IF-3.

Located on the platform of the 30S subunit, it bridges several disparate RNA helices of the 16S rRNA. Forms part of the Shine-Dalgarno cleft in the 70S ribosome. The polypeptide is Small ribosomal subunit protein uS11 (Bacillus licheniformis (strain ATCC 14580 / DSM 13 / JCM 2505 / CCUG 7422 / NBRC 12200 / NCIMB 9375 / NCTC 10341 / NRRL NRS-1264 / Gibson 46)).